A 228-amino-acid polypeptide reads, in one-letter code: 7-cyano-7-deazaguanine synthase (228 aa).

An ATP-binding site is contributed by 9–19 (LSGGPDSTTVL). Residues Cys-193, Cys-203, Cys-206, and Cys-209 each coordinate Zn(2+).

The protein belongs to the QueC family. Zn(2+) is required as a cofactor.

The enzyme catalyses 7-carboxy-7-deazaguanine + NH4(+) + ATP = 7-cyano-7-deazaguanine + ADP + phosphate + H2O + H(+). It functions in the pathway purine metabolism; 7-cyano-7-deazaguanine biosynthesis. Functionally, catalyzes the ATP-dependent conversion of 7-carboxy-7-deazaguanine (CDG) to 7-cyano-7-deazaguanine (preQ(0)). The sequence is that of 7-cyano-7-deazaguanine synthase from Rickettsia africae (strain ESF-5).